Consider the following 198-residue polypeptide: Sporulation-specific protein 16 (198 aa).

Its function is as follows. Necessary for efficient spore formation. This chain is Sporulation-specific protein 16 (SPO16), found in Saccharomyces cerevisiae (strain ATCC 204508 / S288c) (Baker's yeast).